Consider the following 376-residue polypeptide: Serpin B9 (376 aa).

Methionine 1 carries the N-acetylmethionine modification.

The protein belongs to the serpin family. Ov-serpin subfamily.

It localises to the cytoplasm. Granzyme B inhibitor. The chain is Serpin B9 (SERPINB9) from Homo sapiens (Human).